The sequence spans 465 residues: A-type ATP synthase subunit B (465 aa).

The protein belongs to the ATPase alpha/beta chains family. As to quaternary structure, has multiple subunits with at least A(3), B(3), C, D, E, F, H, I and proteolipid K(x).

It is found in the cell membrane. In terms of biological role, component of the A-type ATP synthase that produces ATP from ADP in the presence of a proton gradient across the membrane. The B chain is a regulatory subunit. This is A-type ATP synthase subunit B from Thermococcus kodakarensis (strain ATCC BAA-918 / JCM 12380 / KOD1) (Pyrococcus kodakaraensis (strain KOD1)).